The primary structure comprises 588 residues: Aspartate--tRNA ligase (588 aa).

Position 172 (Glu-172) interacts with L-aspartate. The tract at residues 196-199 (QLFK) is aspartate. Residue Arg-218 coordinates L-aspartate. ATP-binding positions include 218 to 220 (RDE) and Gln-227. His-449 lines the L-aspartate pocket. Glu-483 is a binding site for ATP. Residue Arg-490 coordinates L-aspartate. 535–538 (GLDR) is an ATP binding site.

Belongs to the class-II aminoacyl-tRNA synthetase family. Type 1 subfamily. As to quaternary structure, homodimer.

The protein localises to the cytoplasm. It carries out the reaction tRNA(Asp) + L-aspartate + ATP = L-aspartyl-tRNA(Asp) + AMP + diphosphate. Its function is as follows. Catalyzes the attachment of L-aspartate to tRNA(Asp) in a two-step reaction: L-aspartate is first activated by ATP to form Asp-AMP and then transferred to the acceptor end of tRNA(Asp). The protein is Aspartate--tRNA ligase of Haemophilus influenzae (strain 86-028NP).